We begin with the raw amino-acid sequence, 249 residues long: Ubiquinone/menaquinone biosynthesis C-methyltransferase UbiE (249 aa).

Residues threonine 74, aspartate 93, and 121-122 (DA) contribute to the S-adenosyl-L-methionine site.

Belongs to the class I-like SAM-binding methyltransferase superfamily. MenG/UbiE family.

It carries out the reaction a 2-demethylmenaquinol + S-adenosyl-L-methionine = a menaquinol + S-adenosyl-L-homocysteine + H(+). The enzyme catalyses a 2-methoxy-6-(all-trans-polyprenyl)benzene-1,4-diol + S-adenosyl-L-methionine = a 5-methoxy-2-methyl-3-(all-trans-polyprenyl)benzene-1,4-diol + S-adenosyl-L-homocysteine + H(+). It participates in quinol/quinone metabolism; menaquinone biosynthesis; menaquinol from 1,4-dihydroxy-2-naphthoate: step 2/2. The protein operates within cofactor biosynthesis; ubiquinone biosynthesis. In terms of biological role, methyltransferase required for the conversion of demethylmenaquinol (DMKH2) to menaquinol (MKH2) and the conversion of 2-polyprenyl-6-methoxy-1,4-benzoquinol (DDMQH2) to 2-polyprenyl-3-methyl-6-methoxy-1,4-benzoquinol (DMQH2). The chain is Ubiquinone/menaquinone biosynthesis C-methyltransferase UbiE from Acidiphilium cryptum (strain JF-5).